The primary structure comprises 503 residues: Alpha-1,3/1,6-mannosyltransferase ALG2 (503 aa).

Transmembrane regions (helical) follow at residues 64–84 and 112–132; these read VYGD…FATI and TCIP…CHFP. Residues asparagine 170, asparagine 303, asparagine 371, and asparagine 400 are each glycosylated (N-linked (GlcNAc...) asparagine). Residues 443–463 traverse the membrane as a helical segment; the sequence is WEIFGISFSNFILHMAFIKIL.

Belongs to the glycosyltransferase group 1 family. Glycosyltransferase 4 subfamily. As to quaternary structure, interacts with ALG1.

It localises to the endoplasmic reticulum membrane. The catalysed reaction is a beta-D-Man-(1-&gt;4)-beta-D-GlcNAc-(1-&gt;4)-alpha-D-GlcNAc-diphospho-di-trans,poly-cis-dolichol + GDP-alpha-D-mannose = an alpha-D-Man-(1-&gt;3)-beta-D-Man-(1-&gt;4)-beta-D-GlcNAc-(1-&gt;4)-alpha-D-GlcNAc-diphospho-di-trans,poly-cis-dolichol + GDP + H(+). It catalyses the reaction an alpha-D-Man-(1-&gt;3)-beta-D-Man-(1-&gt;4)-beta-D-GlcNAc-(1-&gt;4)-alpha-D-GlcNAc-diphospho-di-trans,poly-cis-dolichol + GDP-alpha-D-mannose = an alpha-D-Man-(1-&gt;3)-[alpha-D-Man-(1-&gt;6)]-beta-D-Man-(1-&gt;4)-beta-D-GlcNAc-(1-&gt;4)-alpha-D-GlcNAc-diphospho-di-trans,poly-cis-dolichol + GDP + H(+). The protein operates within protein modification; protein glycosylation. In terms of biological role, mannosylates Man(2)GlcNAc(2)-dolichol diphosphate and Man(1)GlcNAc(2)-dolichol diphosphate to form Man(3)GlcNAc(2)-dolichol diphosphate. The sequence is that of Alpha-1,3/1,6-mannosyltransferase ALG2 (ALG2) from Saccharomyces cerevisiae (strain ATCC 204508 / S288c) (Baker's yeast).